Consider the following 208-residue polypeptide: Ion-translocating oxidoreductase complex subunit G (208 aa).

A helical transmembrane segment spans residues 9–29 (GVTLAVFAALTTGLTAMVNAL). At Thr-174 the chain carries FMN phosphoryl threonine.

This sequence belongs to the RnfG family. In terms of assembly, the complex is composed of six subunits: RnfA, RnfB, RnfC, RnfD, RnfE and RnfG. FMN is required as a cofactor.

The protein localises to the cell inner membrane. Functionally, part of a membrane-bound complex that couples electron transfer with translocation of ions across the membrane. The sequence is that of Ion-translocating oxidoreductase complex subunit G from Cronobacter sakazakii (strain ATCC BAA-894) (Enterobacter sakazakii).